Reading from the N-terminus, the 261-residue chain is 3'-5' ssDNA/RNA exonuclease TatD (261 aa).

Residues Glu92, His128, and His153 each contribute to the a divalent metal cation site.

Belongs to the metallo-dependent hydrolases superfamily. TatD-type hydrolase family. TatD subfamily. As to quaternary structure, monomer. Mg(2+) serves as cofactor.

The protein localises to the cytoplasm. In terms of biological role, 3'-5' exonuclease that prefers single-stranded DNA and RNA. May play a role in the H(2)O(2)-induced DNA damage repair. The chain is 3'-5' ssDNA/RNA exonuclease TatD from Erwinia billingiae (strain Eb661).